A 329-amino-acid chain; its full sequence is Probable cell division protein WhiA (329 aa).

A DNA-binding region (H-T-H motif) is located at residues 275-308; the sequence is SLEELGALADPPLTKDAVAGRIRRLLAMADKRAQ.

The protein belongs to the WhiA family.

Its function is as follows. Involved in cell division and chromosome segregation. The polypeptide is Probable cell division protein WhiA (Streptomyces avermitilis (strain ATCC 31267 / DSM 46492 / JCM 5070 / NBRC 14893 / NCIMB 12804 / NRRL 8165 / MA-4680)).